The sequence spans 195 residues: Peroxisomal membrane protein 2 (195 aa).

The Cytoplasmic portion of the chain corresponds to 1-30 (MAPAASRLRAEAGLGALPRRALAQYLLFLR). Residues 31 to 51 (LYPVLTKAATSGILSALGNFL) form a helical membrane-spanning segment. Topologically, residues 52 to 75 (AQMIEKKRKKENSRSLDVGGPLRY) are peroxisomal. The helical transmembrane segment at 76 to 96 (AVYGFFFTGPLSHFFYFFMEH) threads the bilayer. Topologically, residues 97 to 114 (WIPPEVPLAGLRRLLLDR) are cytoplasmic. Residues 115-135 (LVFAPAFLMLFFLIMNFLEGK) form a helical membrane-spanning segment. The Peroxisomal segment spans residues 136–173 (DASAFAAKMRGGFWPALRMNWRVWTPLQFININYVPLK). Residues 174 to 194 (FRVLFANLAALFWYAYLASLG) traverse the membrane as a helical segment.

This sequence belongs to the peroxisomal membrane protein PXMP2/4 family. In terms of assembly, interacts with PEX19 and SIVA1.

The protein resides in the peroxisome membrane. Functionally, seems to be involved in pore-forming activity and may contribute to the unspecific permeability of the peroxisomal membrane. The sequence is that of Peroxisomal membrane protein 2 (PXMP2) from Homo sapiens (Human).